The chain runs to 428 residues: Histidinol dehydrogenase (428 aa).

Residues tyrosine 124, glutamine 186, and asparagine 209 each contribute to the NAD(+) site. Substrate-binding residues include serine 233, glutamine 255, and histidine 258. Residues glutamine 255 and histidine 258 each coordinate Zn(2+). Residues glutamate 322 and histidine 323 each act as proton acceptor in the active site. Residues histidine 323, aspartate 356, glutamate 410, and histidine 415 each coordinate substrate. Aspartate 356 serves as a coordination point for Zn(2+). Residue histidine 415 coordinates Zn(2+).

Belongs to the histidinol dehydrogenase family. Zn(2+) is required as a cofactor.

The enzyme catalyses L-histidinol + 2 NAD(+) + H2O = L-histidine + 2 NADH + 3 H(+). It participates in amino-acid biosynthesis; L-histidine biosynthesis; L-histidine from 5-phospho-alpha-D-ribose 1-diphosphate: step 9/9. In terms of biological role, catalyzes the sequential NAD-dependent oxidations of L-histidinol to L-histidinaldehyde and then to L-histidine. This is Histidinol dehydrogenase from Bacteroides fragilis (strain YCH46).